We begin with the raw amino-acid sequence, 439 residues long: Trigger factor (439 aa).

Residues 162 to 247 (GDRLTLDFIG…LKKVEAMILP (86 aa)) enclose the PPIase FKBP-type domain.

It belongs to the FKBP-type PPIase family. Tig subfamily.

It localises to the cytoplasm. It catalyses the reaction [protein]-peptidylproline (omega=180) = [protein]-peptidylproline (omega=0). Involved in protein export. Acts as a chaperone by maintaining the newly synthesized protein in an open conformation. Functions as a peptidyl-prolyl cis-trans isomerase. This Dichelobacter nodosus (strain VCS1703A) protein is Trigger factor.